Reading from the N-terminus, the 567-residue chain is Cytochrome P450 monooxygenase 69 (567 aa).

A helical transmembrane segment spans residues 7-24 (ELAALTVVLLATGVLFYA). Residues asparagine 25, asparagine 81, asparagine 223, and asparagine 279 are each glycosylated (N-linked (GlcNAc...) asparagine). Cysteine 475 contributes to the heme binding site.

Belongs to the cytochrome P450 family. Requires heme as cofactor.

The protein localises to the membrane. The protein operates within secondary metabolite biosynthesis. Functionally, cytochrome P450 monooxygenase that is able to use 4-ethoxybenzoic acid as a substrate for oxidation. The protein is Cytochrome P450 monooxygenase 69 of Postia placenta (strain ATCC 44394 / Madison 698-R) (Brown rot fungus).